Consider the following 308-residue polypeptide: MPGQELKTLNGSQMLLVLLVLLWPPHGGAVSLAEASRASFPGPSDLHSEDSRFRELRKRYEDLLTRLRANQSWEDSNTDLIQAPEVRILTPEVRLGSGGHLHLRISRAVLPEGLPEACRIHRALFRLSPTASRSRDVTRPLRRQLRLARPQAPALHLRLSPPPSQSDQLLVKSSSSRPQLALHLRPRASRGRRRARARNGDRCPLGPGRCCRLHTVHASLEDLGWADWVLSPREVQVTMCIGACPSQFREANMHAQIKMNLHRLKPDTVPAPCCVPASYNPMVLIQKTDTGVSLQTYDDLLAKDCHCV.

The signal sequence occupies residues 1 to 29 (MPGQELKTLNGSQMLLVLLVLLWPPHGGA). Positions 30–192 (VSLAEASRAS…HLRPRASRGR (163 aa)) are excised as a propeptide. Asparagine 70 carries N-linked (GlcNAc...) asparagine glycosylation. The interval 152–179 (APALHLRLSPPPSQSDQLLVKSSSSRPQ) is disordered. Over residues 165-178 (QSDQLLVKSSSSRP) the composition is skewed to polar residues. Cystine bridges form between cysteine 203-cysteine 210, cysteine 211-cysteine 274, cysteine 240-cysteine 305, and cysteine 244-cysteine 307.

It belongs to the TGF-beta family. As to quaternary structure, homodimer; disulfide-linked. Interacts with GFRAL and RET; ligand of GFRAL, which mediates GDF15 internalization and cellular signaling through interaction with RET via the formation of a 2:2:2 ternary complex composed of GDF15, GFRAL and RET. In terms of tissue distribution, detected in plasma (at protein level).

Its subcellular location is the secreted. In terms of biological role, hormone produced in response to various stresses to confer information about those stresses to the brain, and trigger an aversive response, characterized by nausea and/or loss of appetite. The aversive response is both required to reduce continuing exposure to those stresses at the time of exposure and to promote avoidance behavior in the future. Acts by binding to its receptor, GFRAL, activating GFRAL-expressing neurons localized in the area postrema and nucleus tractus solitarius of the brainstem. It then triggers the activation of neurons localized within the parabrachial nucleus and central amygdala, which constitutes part of the 'emergency circuit' that shapes responses to stressful conditions. The GDF15-GFRAL signal induces expression of genes involved in metabolism, such as lipid metabolism in adipose tissues. Required for avoidance behavior in response to food allergens: induced downstream of mast cell activation to promote aversion and minimize harmful effects of exposure to noxious substances. In addition to suppress appetite, also promotes weight loss by enhancing energy expenditure in muscle: acts by increasing calcium futile cycling in muscle. Contributes to the effect of metformin, an anti-diabetic drug, on appetite reduction and weight loss: produced in the kidney in response to metformin treatment, thereby activating the GDF15-GFRAL response, leading to reduced appetite and weight. Produced in response to anticancer drugs, such as camptothecin or cisplatin, promoting nausea and contributing to malnutrition. Overproduced in many cancers, promoting anorexia in cancer (cachexia). Responsible for the risk of nausea during pregnancy: high levels of GDF15 during pregnancy, mostly originating from embryos, are associated with increased nausea. Maternal sensitivity to nausea is probably determined by pre-pregnancy exposure to GDF15, females with naturally high level of GDF15 being less susceptible to nausea than females with low levels of GDF15 before pregnancy. Promotes metabolic adaptation in response to systemic inflammation caused by bacterial and viral infections in order to promote tissue tolerance and prevent tissue damage. Inhibits growth hormone signaling on hepatocytes. The sequence is that of Growth/differentiation factor 15 from Macaca fascicularis (Crab-eating macaque).